Here is a 1616-residue protein sequence, read N- to C-terminus: S-layer-related protein (1616 aa).

The first 30 residues, 1–30, serve as a signal peptide directing secretion; that stretch reads MKSLLRKWNGMMIIALVISLLTPAWGKASA. The BIG2 domain maps to 1115 to 1185; sequence VKALKLDRGT…GSGTVQATYE (71 aa). 4 disordered regions span residues 1191–1244, 1372–1455, 1523–1554, and 1585–1616; these read ARVS…DGRN, NKRN…GRAR, ARGR…REAG, and FAGG…ARPC. The span at 1199-1225 shows a compositional bias: gly residues; sequence STGGGSDTGSGTGSGSGGGSAGGGGTA. Over residues 1372–1387 the composition is skewed to basic residues; sequence NKRNRRLRKLRPKNRK. Low complexity predominate over residues 1406 to 1416; it reads PPECSASCPPA. One can recognise an SLH domain in the interval 1438-1502; sequence WSPPRSASPT…ALDPAPAAAD (65 aa). Basic and acidic residues predominate over residues 1536–1554; the sequence is RGADTRTDERDAHARREAG. Positions 1594-1616 are enriched in basic residues; that stretch reads GRTRGRTLRARPARLPVRKARPC.

Its subcellular location is the secreted. It localises to the cell wall. It is found in the S-layer. The S-layer is a paracrystalline mono-layered assembly of proteins which coats the surface of bacteria. May play a role in the export of butirosin from the organism. This chain is S-layer-related protein (butB), found in Niallia circulans (Bacillus circulans).